A 146-amino-acid polypeptide reads, in one-letter code: Hemoglobin subunit beta (146 aa).

The Globin domain occupies 2–146 (PFSAHEEKLI…VAAALSAEYH (145 aa)). Residues His63 and His92 each coordinate heme b.

This sequence belongs to the globin family. Heterotetramer of two alpha chains and two beta chains. As to expression, red blood cells.

In terms of biological role, involved in oxygen transport from the lung to the various peripheral tissues. This is Hemoglobin subunit beta (HBB) from Caiman crocodilus (Spectacled caiman).